Consider the following 577-residue polypeptide: Arginine--tRNA ligase (577 aa).

Residues 122–132 (PNVAKEMHVGH) carry the 'HIGH' region motif.

This sequence belongs to the class-I aminoacyl-tRNA synthetase family. Monomer.

The protein localises to the cytoplasm. The catalysed reaction is tRNA(Arg) + L-arginine + ATP = L-arginyl-tRNA(Arg) + AMP + diphosphate. This Salmonella dublin (strain CT_02021853) protein is Arginine--tRNA ligase.